Consider the following 122-residue polypeptide: Ribosome-binding factor A (122 aa).

The protein belongs to the RbfA family. In terms of assembly, monomer. Binds 30S ribosomal subunits, but not 50S ribosomal subunits or 70S ribosomes.

The protein resides in the cytoplasm. Functionally, one of several proteins that assist in the late maturation steps of the functional core of the 30S ribosomal subunit. Associates with free 30S ribosomal subunits (but not with 30S subunits that are part of 70S ribosomes or polysomes). Required for efficient processing of 16S rRNA. May interact with the 5'-terminal helix region of 16S rRNA. This Burkholderia thailandensis (strain ATCC 700388 / DSM 13276 / CCUG 48851 / CIP 106301 / E264) protein is Ribosome-binding factor A.